We begin with the raw amino-acid sequence, 438 residues long: Argininosuccinate lyase (438 aa).

The protein belongs to the lyase 1 family. Argininosuccinate lyase subfamily.

Its subcellular location is the cytoplasm. It catalyses the reaction 2-(N(omega)-L-arginino)succinate = fumarate + L-arginine. It participates in amino-acid biosynthesis; L-arginine biosynthesis; L-arginine from L-ornithine and carbamoyl phosphate: step 3/3. This Clostridium tetani (strain Massachusetts / E88) protein is Argininosuccinate lyase.